We begin with the raw amino-acid sequence, 254 residues long: Probable phosphatase Sbal223_2880 (254 aa).

The Zn(2+) site is built by H8, H10, H16, H41, E74, H102, H132, D193, and H195.

This sequence belongs to the PHP family. It depends on Zn(2+) as a cofactor.

This Shewanella baltica (strain OS223) protein is Probable phosphatase Sbal223_2880.